A 469-amino-acid polypeptide reads, in one-letter code: 3-isopropylmalate dehydratase large subunit (469 aa).

Residues C349, C410, and C413 each contribute to the [4Fe-4S] cluster site.

It belongs to the aconitase/IPM isomerase family. LeuC type 1 subfamily. In terms of assembly, heterodimer of LeuC and LeuD. Requires [4Fe-4S] cluster as cofactor.

It catalyses the reaction (2R,3S)-3-isopropylmalate = (2S)-2-isopropylmalate. The protein operates within amino-acid biosynthesis; L-leucine biosynthesis; L-leucine from 3-methyl-2-oxobutanoate: step 2/4. Its function is as follows. Catalyzes the isomerization between 2-isopropylmalate and 3-isopropylmalate, via the formation of 2-isopropylmaleate. In Neisseria meningitidis serogroup A / serotype 4A (strain DSM 15465 / Z2491), this protein is 3-isopropylmalate dehydratase large subunit.